A 117-amino-acid polypeptide reads, in one-letter code: Modulator protein MzrA (117 aa).

Residues 1–9 (MNSPGLRKP) lie on the Cytoplasmic side of the membrane. The chain crosses the membrane as a helical span at residues 10–29 (TIWRPLLLLFPLLALLLSMS). Residues 30–117 (SPRLPDEVML…THGTIRVARS (88 aa)) lie on the Periplasmic side of the membrane.

It belongs to the MzrA family. In terms of assembly, interacts with EnvZ.

The protein localises to the cell inner membrane. Modulates the activity of the EnvZ/OmpR two-component regulatory system, probably by directly modulating EnvZ enzymatic activity and increasing stability of phosphorylated OmpR. This Dickeya zeae (strain Ech586) (Dickeya dadantii (strain Ech586)) protein is Modulator protein MzrA.